A 34-amino-acid chain; its full sequence is Leader peptide SpeFL (34 aa).

An Ornithine recognition loop motif is present at residues 10 to 16; it reads HIRRTTH. An L-ornithine-binding site is contributed by arginine 13.

This sequence belongs to the speF operon leader peptide family. Binds ornithine in stalled 70S ribosomes, blocking the upper two-thirds of the exit tunnel. Contacts 23S rRNA and ribosomal proteins L4 and L22.

In terms of biological role, a small protein (arrest peptide) encoded upstream of inducible ornithine carboxylase gene (speF) that controls expression of downstream genes (speF and potE) by transcriptional and translational attenuation. Its expression controls transcription and translation of downstream SpeF; translation pausing at low Arg levels on this mRNA prevents premature Rho-dependent transcription termination of speF and also enhances SprF translation by preventing sequestration of its ribosome-binding site. In the presence of high Arg levels translation of this protein allows the formation of an speF mRNA structure that is degraded by RNase G. The polypeptide is Leader peptide SpeFL (Salmonella typhimurium (strain SL1344)).